Here is a 366-residue protein sequence, read N- to C-terminus: Chorismate synthase (366 aa).

NADP(+)-binding residues include Arg48 and Arg54. Residues 125–127, 238–239, Gly278, 293–297, and Arg319 each bind FMN; these read RSS, NA, and KPTSS.

The protein belongs to the chorismate synthase family. As to quaternary structure, homotetramer. It depends on FMNH2 as a cofactor.

It carries out the reaction 5-O-(1-carboxyvinyl)-3-phosphoshikimate = chorismate + phosphate. The protein operates within metabolic intermediate biosynthesis; chorismate biosynthesis; chorismate from D-erythrose 4-phosphate and phosphoenolpyruvate: step 7/7. Catalyzes the anti-1,4-elimination of the C-3 phosphate and the C-6 proR hydrogen from 5-enolpyruvylshikimate-3-phosphate (EPSP) to yield chorismate, which is the branch point compound that serves as the starting substrate for the three terminal pathways of aromatic amino acid biosynthesis. This reaction introduces a second double bond into the aromatic ring system. This is Chorismate synthase from Ralstonia nicotianae (strain ATCC BAA-1114 / GMI1000) (Ralstonia solanacearum).